A 442-amino-acid chain; its full sequence is UBX domain-containing protein 6 (442 aa).

A mediates interaction with LMAN1 region spans residues 1–10; sequence MKKFFQEIKA. A disordered region spans residues 13 to 111; the sequence is KFKSAGPGQK…TNSVPEPKEE (99 aa). S36 bears the Phosphoserine mark. Residues 51-63 are VCP/p97-interacting motif (VIM); the sequence is EAQMAAAAALARL. The segment covering 52 to 61 has biased composition (low complexity); sequence AQMAAAAALA. A compositionally biased stretch (polar residues) spans 90–105; the sequence is EATSSNNPGAPGTNSV. In terms of domain architecture, PUB spans 175–244; sequence VDTIAKYLDN…GQEEFYVLGE (70 aa). Positions 332-408 constitute a UBX domain; sequence RKYTYALVRV…GLVPSALLTF (77 aa).

In terms of assembly, interacts with VCP through the PUB domain (via C-terminus) and VIM motif (via N-terminus); the interaction is direct. Forms a ternary complex with CAV1 and VCP. Interacts with SYVN1. Interacts with HERPUD1. Interacts with VCPKMT. May interact with DERL1. Interacts with PLAA, VCP and YOD1; may form a complex involved in macroautophagy. Interacts with LMAN1. In terms of tissue distribution, widely expressed (at protein level). Highest expression in brain (at protein level).

The protein localises to the cytoplasm. It localises to the cytosol. The protein resides in the membrane. It is found in the nucleus. Its subcellular location is the cytoskeleton. The protein localises to the microtubule organizing center. It localises to the centrosome. The protein resides in the early endosome membrane. It is found in the late endosome membrane. Its subcellular location is the lysosome membrane. May negatively regulate the ATPase activity of VCP, an ATP-driven segregase that associates with different cofactors to control a wide variety of cellular processes. As a cofactor of VCP, it may play a role in the transport of CAV1 to lysosomes for degradation. It may also play a role in endoplasmic reticulum-associated degradation (ERAD) of misfolded proteins. Together with VCP and other cofactors, it may play a role in macroautophagy, regulating for instance the clearance of damaged lysosomes. This is UBX domain-containing protein 6 from Mus musculus (Mouse).